The sequence spans 549 residues: Oxygen-dependent choline dehydrogenase (549 aa).

4-33 (DFVIIGSGSAGSAMAYRLSEDGRYSVIVIE) lines the FAD pocket. The active-site Proton acceptor is H465.

Belongs to the GMC oxidoreductase family. It depends on FAD as a cofactor.

The enzyme catalyses choline + A = betaine aldehyde + AH2. It catalyses the reaction betaine aldehyde + NAD(+) + H2O = glycine betaine + NADH + 2 H(+). Its pathway is amine and polyamine biosynthesis; betaine biosynthesis via choline pathway; betaine aldehyde from choline (cytochrome c reductase route): step 1/1. In terms of biological role, involved in the biosynthesis of the osmoprotectant glycine betaine. Catalyzes the oxidation of choline to betaine aldehyde and betaine aldehyde to glycine betaine at the same rate. This chain is Oxygen-dependent choline dehydrogenase, found in Brucella anthropi (strain ATCC 49188 / DSM 6882 / CCUG 24695 / JCM 21032 / LMG 3331 / NBRC 15819 / NCTC 12168 / Alc 37) (Ochrobactrum anthropi).